A 542-amino-acid polypeptide reads, in one-letter code: Calcium-dependent protein kinase 15 (542 aa).

The segment at 1-73 is disordered; sequence MGARASRHRQ…QAPQQAAAED (73 aa). A lipid anchor (N-myristoyl glycine) is attached at glycine 2. Residues 12–21 are compositionally biased toward low complexity; sequence PDQSQSQSPS. Over residues 22-40 the composition is skewed to basic residues; it reads PHHKHHHHHQTTRAPKPKP. Pro residues predominate over residues 41–60; the sequence is KPQPPPPQQPRSQPPPPPRH. Low complexity predominate over residues 61-71; sequence QPQQAPQQAAA. The Protein kinase domain occupies 90–348; it reads YTFGRELGRG…AAEILNHPWI (259 aa). Residues 96–104 and lysine 119 each bind ATP; that span reads LGRGQFGVT. Aspartate 214 serves as the catalytic Proton acceptor. Positions 354 to 384 are autoinhibitory domain; sequence APDKPLDITVISRMKQFRAMNKLKKVALKVV. 4 EF-hand domains span residues 391 to 426, 427 to 462, 463 to 497, and 498 to 533; these read EEIV…LGTK, ISES…MNRL, EKED…KYDM, and GDEA…NSPE. Ca(2+) is bound by residues aspartate 404, aspartate 406, serine 408, threonine 410, glutamate 415, aspartate 440, aspartate 442, asparagine 444, serine 446, glutamate 451, aspartate 476, aspartate 478, serine 480, glutamate 487, aspartate 511, aspartate 513, aspartate 515, arginine 517, and glutamate 522.

This sequence belongs to the protein kinase superfamily. Ser/Thr protein kinase family. CDPK subfamily.

It is found in the membrane. The enzyme catalyses L-seryl-[protein] + ATP = O-phospho-L-seryl-[protein] + ADP + H(+). It carries out the reaction L-threonyl-[protein] + ATP = O-phospho-L-threonyl-[protein] + ADP + H(+). Its activity is regulated as follows. Activated by calcium. Autophosphorylation may play an important role in the regulation of the kinase activity. Functionally, may play a role in signal transduction pathways that involve calcium as a second messenger. This chain is Calcium-dependent protein kinase 15, found in Oryza sativa subsp. japonica (Rice).